We begin with the raw amino-acid sequence, 323 residues long: Lipoyl synthase (323 aa).

Residues Cys-53, Cys-58, Cys-64, Cys-79, Cys-83, Cys-86, and Ser-293 each contribute to the [4Fe-4S] cluster site. In terms of domain architecture, Radical SAM core spans 65 to 282 (WTKKQATVMI…AATARAKGFS (218 aa)).

This sequence belongs to the radical SAM superfamily. Lipoyl synthase family. [4Fe-4S] cluster is required as a cofactor.

The protein resides in the cytoplasm. The enzyme catalyses [[Fe-S] cluster scaffold protein carrying a second [4Fe-4S](2+) cluster] + N(6)-octanoyl-L-lysyl-[protein] + 2 oxidized [2Fe-2S]-[ferredoxin] + 2 S-adenosyl-L-methionine + 4 H(+) = [[Fe-S] cluster scaffold protein] + N(6)-[(R)-dihydrolipoyl]-L-lysyl-[protein] + 4 Fe(3+) + 2 hydrogen sulfide + 2 5'-deoxyadenosine + 2 L-methionine + 2 reduced [2Fe-2S]-[ferredoxin]. The protein operates within protein modification; protein lipoylation via endogenous pathway; protein N(6)-(lipoyl)lysine from octanoyl-[acyl-carrier-protein]: step 2/2. Functionally, catalyzes the radical-mediated insertion of two sulfur atoms into the C-6 and C-8 positions of the octanoyl moiety bound to the lipoyl domains of lipoate-dependent enzymes, thereby converting the octanoylated domains into lipoylated derivatives. The sequence is that of Lipoyl synthase from Zymomonas mobilis subsp. mobilis (strain ATCC 31821 / ZM4 / CP4).